A 145-amino-acid chain; its full sequence is MRLLVLAALLTVGAGQAGLNSRALWQFNGMIKCKIPSSEPLLDFNNYGCYCGLGGSGTPVDDLDRCCQTHDNCYKQAKKLDSCKVLVDNPYTNNYSYSCSNNEITCSSENNACEAFICNCDRNAAICFSKVPYNKEHKNLDKKNC.

A signal peptide spans 1–15; that stretch reads MRLLVLAALLTVGAG. Q16 is subject to Pyrrolidone carboxylic acid. Residues 16–22 constitute a propeptide, removed by trypsin; the sequence is QAGLNSR. 7 disulfides stabilise this stretch: C33-C99, C49-C145, C51-C67, C66-C127, C73-C120, C83-C113, and C106-C118. Residues Y50, G52, and G54 each contribute to the Ca(2+) site. Residue H70 is part of the active site. Residue D71 participates in Ca(2+) binding. D121 is an active-site residue.

This sequence belongs to the phospholipase A2 family. Monomer or homodimer. It depends on Ca(2+) as a cofactor. Post-translationally, activated by trypsin cleavage in the duodenum. Can also be activated by thrombin or autocatalytically.

Its subcellular location is the secreted. It catalyses the reaction a 1,2-diacyl-sn-glycero-3-phosphocholine + H2O = a 1-acyl-sn-glycero-3-phosphocholine + a fatty acid + H(+). The catalysed reaction is 1,2-ditetradecanoyl-sn-glycero-3-phosphocholine + H2O = 1-tetradecanoyl-sn-glycero-3-phosphocholine + tetradecanoate + H(+). The enzyme catalyses 1,2-dihexadecanoyl-sn-glycero-3-phosphocholine + H2O = 1-hexadecanoyl-sn-glycero-3-phosphocholine + hexadecanoate + H(+). It carries out the reaction 1-hexadecanoyl-2-(9Z-octadecenoyl)-sn-glycero-3-phosphocholine + H2O = 1-hexadecanoyl-sn-glycero-3-phosphocholine + (9Z)-octadecenoate + H(+). It catalyses the reaction 1-hexadecanoyl-2-(5Z,8Z,11Z,14Z-eicosatetraenoyl)-sn-glycero-3-phosphocholine + H2O = 1-hexadecanoyl-sn-glycero-3-phosphocholine + (5Z,8Z,11Z,14Z)-eicosatetraenoate + H(+). The catalysed reaction is 1-hexadecanoyl-2-(9Z-octadecenoyl)-sn-glycero-3-phospho-(1'-sn-glycerol) + H2O = 1-hexadecanoyl-sn-glycero-3-phospho-(1'-sn-glycerol) + (9Z)-octadecenoate + H(+). The enzyme catalyses N-hexadecanoyl-1,2-di-(9Z-octadecenoyl)-sn-glycero-3-phosphoethanolamine + H2O = N-hexadecanoyl-1-(9Z-octadecenoyl)-sn-glycero-3-phosphoethanolamine + (9Z)-octadecenoate + H(+). It carries out the reaction 1-hexadecanoyl-2-(9Z,12Z-octadecadienoyl)-sn-glycero-3-phosphoethanolamine + H2O = 1-hexadecanoyl-sn-glycero-3-phosphoethanolamine + (9Z,12Z)-octadecadienoate + H(+). It catalyses the reaction N,1-dihexadecanoyl-2-(9Z,12Z-octadecadienoyl)-sn-glycero-3-phosphoethanolamine + H2O = N,1-dihexadecanoyl-sn-glycero-3-phosphoethanolamine + (9Z,12Z)-octadecadienoate + H(+). Its function is as follows. Secretory calcium-dependent phospholipase A2 that primarily targets dietary phospholipids in the intestinal tract. Hydrolyzes the ester bond of the fatty acyl group attached at sn-2 position of phospholipids (phospholipase A2 activity) with preference for phosphatidylethanolamines and phosphatidylglycerols over phosphatidylcholines. May play a role in the biosynthesis of N-acyl ethanolamines that regulate energy metabolism and inflammation in the intestinal tract. Hydrolyzes N-acyl phosphatidylethanolamines to N-acyl lysophosphatidylethanolamines, which are further cleaved by a lysophospholipase D to release N-acyl ethanolamines. May act in an autocrine and paracrine manner. Has anti-helminth activity in a process regulated by gut microbiota. Upon helminth infection of intestinal epithelia, directly affects phosphatidylethanolamine contents in the membrane of helminth larvae, likely controlling an array of phospholipid-mediated cellular processes such as membrane fusion and cell division while providing for better immune recognition, ultimately reducing larvae integrity and infectivity. The polypeptide is Phospholipase A2 (PLA2G1B) (Bos taurus (Bovine)).